Consider the following 73-residue polypeptide: MNYPIVIYPCAEGGFVAEIPALCGCLAQGETLEETLEELMIVKDLWLETAQTHNQKLPSLEAEIAKIKMLSAA.

Belongs to the UPF0150 family.

This chain is UPF0150 protein ssl0259, found in Synechocystis sp. (strain ATCC 27184 / PCC 6803 / Kazusa).